Here is a 415-residue protein sequence, read N- to C-terminus: Glucose-1-phosphate adenylyltransferase (415 aa).

Residues Y100, G165, 182-183, and S200 contribute to the alpha-D-glucose 1-phosphate site; that span reads EK.

This sequence belongs to the bacterial/plant glucose-1-phosphate adenylyltransferase family. Homotetramer.

The enzyme catalyses alpha-D-glucose 1-phosphate + ATP + H(+) = ADP-alpha-D-glucose + diphosphate. The protein operates within glycan biosynthesis; glycogen biosynthesis. Its function is as follows. Involved in the biosynthesis of ADP-glucose, a building block required for the elongation reactions to produce glycogen. Catalyzes the reaction between ATP and alpha-D-glucose 1-phosphate (G1P) to produce pyrophosphate and ADP-Glc. This Bifidobacterium animalis subsp. lactis (strain AD011) protein is Glucose-1-phosphate adenylyltransferase.